A 185-amino-acid polypeptide reads, in one-letter code: Ribosome-recycling factor (185 aa).

It belongs to the RRF family.

It localises to the cytoplasm. Responsible for the release of ribosomes from messenger RNA at the termination of protein biosynthesis. May increase the efficiency of translation by recycling ribosomes from one round of translation to another. The sequence is that of Ribosome-recycling factor from Bacillus mycoides (strain KBAB4) (Bacillus weihenstephanensis).